Reading from the N-terminus, the 278-residue chain is Ribosomal protein L11 methyltransferase (278 aa).

S-adenosyl-L-methionine-binding residues include Thr-131, Gly-152, Asp-173, and Asn-214.

It belongs to the methyltransferase superfamily. PrmA family.

The protein localises to the cytoplasm. It carries out the reaction L-lysyl-[protein] + 3 S-adenosyl-L-methionine = N(6),N(6),N(6)-trimethyl-L-lysyl-[protein] + 3 S-adenosyl-L-homocysteine + 3 H(+). Methylates ribosomal protein L11. The protein is Ribosomal protein L11 methyltransferase of Campylobacter lari (strain RM2100 / D67 / ATCC BAA-1060).